The following is a 369-amino-acid chain: Endophilin-A (369 aa).

The BAR domain occupies 18–248 (TEKMGGAEGT…LQEKRSEAES (231 aa)). Residues 227–247 (QCADVLRGLQETLQEKRSEAE) are a coiled coil. Residues 266 to 295 (GGGGGLNEDGTPSHISSSASPLPSPMRSPA) form a disordered region. The segment covering 277–294 (PSHISSSASPLPSPMRSP) has biased composition (low complexity). In terms of domain architecture, SH3 spans 305–364 (QQQPCCQALYDFEPENPGELAFKENDIITLLNRVDDNWFEGAVNGRTGYFPQSYVQVQVP).

Belongs to the endophilin family.

The protein resides in the cytoplasm. It localises to the membrane. In terms of biological role, required presynaptically at the neuromuscular junction. Implicated in synaptic vesicle endocytosis. This is Endophilin-A from Drosophila erecta (Fruit fly).